Reading from the N-terminus, the 639-residue chain is 3D-(3,5/4)-trihydroxycyclohexane-1,2-dione hydrolase (639 aa).

A thiamine diphosphate-binding site is contributed by glutamate 65. A thiamine pyrophosphate binding region spans residues 437 to 517 (SLPGDLQRMW…INIILFDNSG (81 aa)). Residues aspartate 488 and asparagine 515 each coordinate Mg(2+).

It belongs to the TPP enzyme family. Requires Mg(2+) as cofactor. Thiamine diphosphate serves as cofactor.

The catalysed reaction is 3D-3,5/4-trihydroxycyclohexane-1,2-dione + H2O = 5-deoxy-D-glucuronate + H(+). It participates in polyol metabolism; myo-inositol degradation into acetyl-CoA; acetyl-CoA from myo-inositol: step 3/7. Involved in the cleavage of the C1-C2 bond of 3D-(3,5/4)-trihydroxycyclohexane-1,2-dione (THcHDO) to yield 5-deoxy-glucuronate (5DG). The polypeptide is 3D-(3,5/4)-trihydroxycyclohexane-1,2-dione hydrolase (Geobacillus thermodenitrificans (strain NG80-2)).